Consider the following 130-residue polypeptide: MINNFKGILIIILSFLFLLLFKYSNADDYFPYPFFNDQSNQVILFTEINFQGEKFIYNTSMGYLELPNKFHNNVGSFISGTINVCFIKWDPFEQHQIYSRRVNKDYFSNNRFGSRIDGIYNGLCRDSIWK.

The N-terminal stretch at 1–26 (MINNFKGILIIILSFLFLLLFKYSNA) is a signal peptide. The N-linked (GlcNAc...) asparagine glycan is linked to N58.

Belongs to the Dictyostelium gerABC family.

The protein localises to the secreted. This is an uncharacterized protein from Dictyostelium discoideum (Social amoeba).